Consider the following 168-residue polypeptide: INO80 complex subunit 3 (168 aa).

The segment covering 115–129 has biased composition (polar residues); it reads TNSTLSTPKSFHSPL. The disordered stretch occupies residues 115-168; the sequence is TNSTLSTPKSFHSPLQSRGISPSSAQSSAAVSSSRKQKRKRTSEGPSERRARKK. The span at 130-148 shows a compositional bias: low complexity; sequence QSRGISPSSAQSSAAVSSS. Positions 156-168 are enriched in basic and acidic residues; sequence TSEGPSERRARKK.

Component of the INO80 chromatin remodeling complex.

Its subcellular location is the nucleus. In terms of biological role, component of the INO80 complex which remodels chromatin by shifting nucleosomes and is involved in DNA repair. The chain is INO80 complex subunit 3 (iec3) from Schizosaccharomyces pombe (strain 972 / ATCC 24843) (Fission yeast).